Consider the following 300-residue polypeptide: Bifunctional protein FolD (300 aa).

NADP(+) contacts are provided by residues 168–170 (GRS), S193, and I234.

It belongs to the tetrahydrofolate dehydrogenase/cyclohydrolase family. In terms of assembly, homodimer.

It carries out the reaction (6R)-5,10-methylene-5,6,7,8-tetrahydrofolate + NADP(+) = (6R)-5,10-methenyltetrahydrofolate + NADPH. The catalysed reaction is (6R)-5,10-methenyltetrahydrofolate + H2O = (6R)-10-formyltetrahydrofolate + H(+). The protein operates within one-carbon metabolism; tetrahydrofolate interconversion. In terms of biological role, catalyzes the oxidation of 5,10-methylenetetrahydrofolate to 5,10-methenyltetrahydrofolate and then the hydrolysis of 5,10-methenyltetrahydrofolate to 10-formyltetrahydrofolate. The polypeptide is Bifunctional protein FolD (Ehrlichia ruminantium (strain Gardel)).